Consider the following 453-residue polypeptide: Bifunctional protein GlmU (453 aa).

The segment at 1–226 (MKFSTVILAA…SIEVEGVNDR (226 aa)) is pyrophosphorylase. UDP-N-acetyl-alpha-D-glucosamine contacts are provided by residues 8-11 (LAAG), Lys22, Gln73, 78-79 (GT), 100-102 (YGD), Gly137, Glu151, Asn166, and Asn224. Asp102 is a binding site for Mg(2+). Asn224 is a Mg(2+) binding site. Residues 227–247 (IQLARLERAFQARQAKKLLEQ) are linker. The tract at residues 248-453 (GVMLRDPARF…AGWQRPAKKK (206 aa)) is N-acetyltransferase. 2 residues coordinate UDP-N-acetyl-alpha-D-glucosamine: Arg330 and Lys348. His360 serves as the catalytic Proton acceptor. Residues Tyr363 and Asn374 each coordinate UDP-N-acetyl-alpha-D-glucosamine. Acetyl-CoA is bound by residues Ala377, 383–384 (NY), Ser402, Ala420, and Arg437.

The protein in the N-terminal section; belongs to the N-acetylglucosamine-1-phosphate uridyltransferase family. This sequence in the C-terminal section; belongs to the transferase hexapeptide repeat family. Homotrimer. Mg(2+) serves as cofactor.

It localises to the cytoplasm. It catalyses the reaction alpha-D-glucosamine 1-phosphate + acetyl-CoA = N-acetyl-alpha-D-glucosamine 1-phosphate + CoA + H(+). It carries out the reaction N-acetyl-alpha-D-glucosamine 1-phosphate + UTP + H(+) = UDP-N-acetyl-alpha-D-glucosamine + diphosphate. The protein operates within nucleotide-sugar biosynthesis; UDP-N-acetyl-alpha-D-glucosamine biosynthesis; N-acetyl-alpha-D-glucosamine 1-phosphate from alpha-D-glucosamine 6-phosphate (route II): step 2/2. It functions in the pathway nucleotide-sugar biosynthesis; UDP-N-acetyl-alpha-D-glucosamine biosynthesis; UDP-N-acetyl-alpha-D-glucosamine from N-acetyl-alpha-D-glucosamine 1-phosphate: step 1/1. It participates in bacterial outer membrane biogenesis; LPS lipid A biosynthesis. Functionally, catalyzes the last two sequential reactions in the de novo biosynthetic pathway for UDP-N-acetylglucosamine (UDP-GlcNAc). The C-terminal domain catalyzes the transfer of acetyl group from acetyl coenzyme A to glucosamine-1-phosphate (GlcN-1-P) to produce N-acetylglucosamine-1-phosphate (GlcNAc-1-P), which is converted into UDP-GlcNAc by the transfer of uridine 5-monophosphate (from uridine 5-triphosphate), a reaction catalyzed by the N-terminal domain. The polypeptide is Bifunctional protein GlmU (Vibrio cholerae serotype O1 (strain M66-2)).